The chain runs to 290 residues: 33 kDa chaperonin (290 aa).

2 cysteine pairs are disulfide-bonded: cysteine 235/cysteine 237 and cysteine 268/cysteine 271.

Belongs to the HSP33 family. Under oxidizing conditions two disulfide bonds are formed involving the reactive cysteines. Under reducing conditions zinc is bound to the reactive cysteines and the protein is inactive.

It is found in the cytoplasm. Redox regulated molecular chaperone. Protects both thermally unfolding and oxidatively damaged proteins from irreversible aggregation. Plays an important role in the bacterial defense system toward oxidative stress. This is 33 kDa chaperonin from Streptococcus pyogenes serotype M3 (strain ATCC BAA-595 / MGAS315).